Reading from the N-terminus, the 496-residue chain is Probable cytosol aminopeptidase (496 aa).

Positions 268 and 273 each coordinate Mn(2+). The active site involves Lys280. 3 residues coordinate Mn(2+): Asp291, Asp350, and Glu352. Arg354 is a catalytic residue.

The protein belongs to the peptidase M17 family. Requires Mn(2+) as cofactor.

The protein resides in the cytoplasm. The enzyme catalyses Release of an N-terminal amino acid, Xaa-|-Yaa-, in which Xaa is preferably Leu, but may be other amino acids including Pro although not Arg or Lys, and Yaa may be Pro. Amino acid amides and methyl esters are also readily hydrolyzed, but rates on arylamides are exceedingly low.. It carries out the reaction Release of an N-terminal amino acid, preferentially leucine, but not glutamic or aspartic acids.. Its function is as follows. Presumably involved in the processing and regular turnover of intracellular proteins. Catalyzes the removal of unsubstituted N-terminal amino acids from various peptides. The polypeptide is Probable cytosol aminopeptidase (Thioalkalivibrio sulfidiphilus (strain HL-EbGR7)).